Here is a 730-residue protein sequence, read N- to C-terminus: Elongation factor 2 (730 aa).

Positions 19–228 (TKIRNIGIVA…TGVSFKDVYD (210 aa)) constitute a tr-type G domain. Residues 28 to 35 (AHIDHGKT), 94 to 98 (DTPGH), and 148 to 151 (NKVD) each bind GTP. Residue H596 is modified to Diphthamide.

Belongs to the TRAFAC class translation factor GTPase superfamily. Classic translation factor GTPase family. EF-G/EF-2 subfamily.

The protein localises to the cytoplasm. In terms of biological role, catalyzes the GTP-dependent ribosomal translocation step during translation elongation. During this step, the ribosome changes from the pre-translocational (PRE) to the post-translocational (POST) state as the newly formed A-site-bound peptidyl-tRNA and P-site-bound deacylated tRNA move to the P and E sites, respectively. Catalyzes the coordinated movement of the two tRNA molecules, the mRNA and conformational changes in the ribosome. The polypeptide is Elongation factor 2 (Methanosarcina barkeri (strain Fusaro / DSM 804)).